Consider the following 176-residue polypeptide: N-alpha-acetyltransferase 30 (176 aa).

Residues 3–159 (IVYKPLDIRN…DAFKLILPLT (157 aa)) form the N-acetyltransferase domain.

This sequence belongs to the acetyltransferase family. MAK3 subfamily. As to quaternary structure, component of the N-terminal acetyltransferase C (NatC) complex, which is composed of MAK3, MAK10 and MAK31.

Its subcellular location is the cytoplasm. The protein resides in the nucleus. The catalysed reaction is N-terminal L-methionyl-L-leucyl-[protein] + acetyl-CoA = N-terminal N(alpha)-acetyl-L-methionyl-L-leucyl-[protein] + CoA + H(+). The enzyme catalyses N-terminal L-methionyl-L-isoleucyl-[protein] + acetyl-CoA = N-terminal N(alpha)-acetyl-L-methionyl-L-isoleucyl-[protein] + CoA + H(+). It catalyses the reaction N-terminal L-methionyl-L-phenylalanyl-[protein] + acetyl-CoA = N-terminal N(alpha)-acetyl-L-methionyl-L-phenylalanyl-[protein] + CoA + H(+). It carries out the reaction N-terminal L-methionyl-L-tryptophyl-[protein] + acetyl-CoA = N-terminal N(alpha)-acetyl-L-methionyl-L-tryptophyl-[protein] + CoA + H(+). The catalysed reaction is N-terminal L-methionyl-L-tyrosyl-[protein] + acetyl-CoA = N-terminal N(alpha)-acetyl-L-methionyl-L-tyrosyl-[protein] + CoA + H(+). Its function is as follows. Catalytic component of the NatC N-terminal acetyltransferase, which catalyzes acetylation of the N-terminus Met of L-A virus GAG protein and possibly GRH1. The polypeptide is N-alpha-acetyltransferase 30 (MAK3) (Saccharomyces cerevisiae (strain ATCC 204508 / S288c) (Baker's yeast)).